Reading from the N-terminus, the 942-residue chain is Alanine--tRNA ligase (942 aa).

Residues H586, H590, C695, and H699 each contribute to the Zn(2+) site.

The protein belongs to the class-II aminoacyl-tRNA synthetase family. It depends on Zn(2+) as a cofactor.

The protein resides in the cytoplasm. The enzyme catalyses tRNA(Ala) + L-alanine + ATP = L-alanyl-tRNA(Ala) + AMP + diphosphate. In terms of biological role, catalyzes the attachment of alanine to tRNA(Ala) in a two-step reaction: alanine is first activated by ATP to form Ala-AMP and then transferred to the acceptor end of tRNA(Ala). Also edits incorrectly charged Ser-tRNA(Ala) and Gly-tRNA(Ala) via its editing domain. The chain is Alanine--tRNA ligase from Akkermansia muciniphila (strain ATCC BAA-835 / DSM 22959 / JCM 33894 / BCRC 81048 / CCUG 64013 / CIP 107961 / Muc).